A 382-amino-acid chain; its full sequence is Succinate--CoA ligase [ADP-forming] subunit beta (382 aa).

An ATP-grasp domain is found at 9–240 (KELLKKYGLP…ITQIDPLEVE (232 aa)). ATP is bound by residues K46, E98, T101, and E106. Mg(2+)-binding residues include N195 and D209. Substrate is bound by residues N260 and 317–319 (GIL).

The protein belongs to the succinate/malate CoA ligase beta subunit family. As to quaternary structure, heterotetramer of two alpha and two beta subunits. Requires Mg(2+) as cofactor.

It catalyses the reaction succinate + ATP + CoA = succinyl-CoA + ADP + phosphate. The catalysed reaction is GTP + succinate + CoA = succinyl-CoA + GDP + phosphate. It participates in carbohydrate metabolism; tricarboxylic acid cycle; succinate from succinyl-CoA (ligase route): step 1/1. Functionally, succinyl-CoA synthetase functions in the citric acid cycle (TCA), coupling the hydrolysis of succinyl-CoA to the synthesis of either ATP or GTP and thus represents the only step of substrate-level phosphorylation in the TCA. The beta subunit provides nucleotide specificity of the enzyme and binds the substrate succinate, while the binding sites for coenzyme A and phosphate are found in the alpha subunit. In Hydrogenobaculum sp. (strain Y04AAS1), this protein is Succinate--CoA ligase [ADP-forming] subunit beta.